A 163-amino-acid polypeptide reads, in one-letter code: Phosphopantetheine adenylyltransferase (163 aa).

Position 11 (Thr-11) interacts with substrate. ATP-binding positions include Thr-11–Phe-12 and His-19. Positions 43, 75, and 89 each coordinate substrate. Residues Gly-90–Arg-92, Glu-100, and Tyr-125–Thr-131 contribute to the ATP site.

It belongs to the bacterial CoaD family. In terms of assembly, homohexamer. It depends on Mg(2+) as a cofactor.

The protein resides in the cytoplasm. It catalyses the reaction (R)-4'-phosphopantetheine + ATP + H(+) = 3'-dephospho-CoA + diphosphate. It participates in cofactor biosynthesis; coenzyme A biosynthesis; CoA from (R)-pantothenate: step 4/5. Reversibly transfers an adenylyl group from ATP to 4'-phosphopantetheine, yielding dephospho-CoA (dPCoA) and pyrophosphate. This chain is Phosphopantetheine adenylyltransferase, found in Aromatoleum aromaticum (strain DSM 19018 / LMG 30748 / EbN1) (Azoarcus sp. (strain EbN1)).